A 34-amino-acid chain; its full sequence is Photosystem II reaction center protein M (34 aa).

Residues 5–25 (ILAFIATTLFVLVPTAFLLII) form a helical membrane-spanning segment.

It belongs to the PsbM family. In terms of assembly, PSII is composed of 1 copy each of membrane proteins PsbA, PsbB, PsbC, PsbD, PsbE, PsbF, PsbH, PsbI, PsbJ, PsbK, PsbL, PsbM, PsbT, PsbX, PsbY, PsbZ, Psb30/Ycf12, at least 3 peripheral proteins of the oxygen-evolving complex and a large number of cofactors. It forms dimeric complexes.

It is found in the plastid. The protein localises to the chloroplast thylakoid membrane. In terms of biological role, one of the components of the core complex of photosystem II (PSII). PSII is a light-driven water:plastoquinone oxidoreductase that uses light energy to abstract electrons from H(2)O, generating O(2) and a proton gradient subsequently used for ATP formation. It consists of a core antenna complex that captures photons, and an electron transfer chain that converts photonic excitation into a charge separation. This subunit is found at the monomer-monomer interface. The polypeptide is Photosystem II reaction center protein M (Citrus sinensis (Sweet orange)).